We begin with the raw amino-acid sequence, 748 residues long: Structure-specific endonuclease subunit SLX4 (748 aa).

A compositionally biased stretch (polar residues) spans 62–75; it reads KSVTAQKSPMTQET. The segment at 62 to 104 is disordered; that stretch reads KSVTAQKSPMTQETTKNDTERNKDVDKSCNPVSTSHPDLGGSN. Thr72 is modified (phosphothreonine; by ATR and ATM). A compositionally biased stretch (basic and acidic residues) spans 76–88; it reads TKNDTERNKDVDK. Phosphothreonine; by ATR and ATM is present on Thr113. Disordered stretches follow at residues 215–236 and 277–303; these read IKTQNEGNSDKPPRARNNKGEK and EKSSNSLDNQESSQQRLWTASQLPPEL. The span at 222–236 shows a compositional bias: basic and acidic residues; sequence NSDKPPRARNNKGEK. Polar residues predominate over residues 277–298; sequence EKSSNSLDNQESSQQRLWTASQ. At Ser289 the chain carries Phosphoserine; by ATR and ATM. Position 319 is a phosphothreonine; by ATR and ATM (Thr319). Phosphoserine; by ATR and ATM occurs at positions 329 and 355. A compositionally biased stretch (polar residues) spans 591 to 602; sequence ISTKDSTQNPTT. Positions 591 to 610 are disordered; that stretch reads ISTKDSTQNPTTSNDIIDTS.

This sequence belongs to the SLX4 family. In terms of assembly, forms a heterodimer with SLX1. Interacts with RAD1; catalytic subunit of the RAD1-RAD10 endonuclease. Interacts with RTT107. In terms of processing, phosphorylated by ATR (MEC1) and ATM (TEL1) upon DNA damage. This appears to be required for the function with the RAD1-RAD10 endonuclease.

It is found in the nucleus. It localises to the cytoplasm. Functionally, regulatory subunit that interacts with and increases the activity of different structure-specific endonucleases. Has several distinct roles in protecting genome stability by resolving diverse forms of deleterious DNA structures. Component of the SLX1-SLX4 structure-specific endonuclease that resolves DNA secondary structures generated during DNA repair and recombination. Has endonuclease activity towards branched DNA substrates, introducing single-strand cuts in duplex DNA close to junctions with ss-DNA. Has a preference for simple Y, 5'-flap and replication fork-like structures. It cleaves the strand bearing the 5'-non-homologous arm at the branch site junction and generates ligatable, nicked products from the 5'-flap or replication fork substrates. Plays a critical role in maintaining the integrity of the ribosomal DNA (rDNA) loci, where it has a role in re-starting stalled replication forks. Has Holliday junction resolvase activity in vitro. Interacts with the structure-specific RAD1-RAD10 endonuclease and promotes RAD1-RAD10-dependent 3'-non-homologous tail removal (NHTR) during repair of double-strand breaks by single-strand annealing. SLX4 also promotes recovery from DNA-alkylation-induced replisome stalling during DNA replication by facilitating the error-free mode of lesion bypass. This does not require SLX1 or RAD1-RAD10, but probably RTT107. The chain is Structure-specific endonuclease subunit SLX4 from Saccharomyces cerevisiae (strain RM11-1a) (Baker's yeast).